Reading from the N-terminus, the 680-residue chain is Probable oxidoreductase YoaE (680 aa).

The 58-residue stretch at 9–66 (NGIFKSVCSLDCPDQCGLLIHKKDGKIVKVQGDPDHPVTAGNICNKVRNMTERIYDEK) folds into the 4Fe-4S Mo/W bis-MGD-type domain. [4Fe-4S] cluster-binding residues include Cys-16, Cys-20, Cys-24, and Cys-52.

Belongs to the prokaryotic molybdopterin-containing oxidoreductase family. The cofactor is Mo-bis(molybdopterin guanine dinucleotide).

In Bacillus subtilis (strain 168), this protein is Probable oxidoreductase YoaE (yoaE).